A 347-amino-acid polypeptide reads, in one-letter code: Ornithine transcarbamylase, mitochondrial (347 aa).

The N-terminal 25 residues, 1 to 25, are a transit peptide targeting the mitochondrion; the sequence is MINSISNTVLLKSVVSKRFFSSSAK. Carbamoyl phosphate is bound by residues 84 to 87, Arg-135, His-162, and Gln-165; that span reads STRT. Residues Asn-194, Asp-258, Ser-262, and Met-263 each contribute to the L-ornithine site. Cys-300 serves as the catalytic Proton acceptor. Carbamoyl phosphate-binding positions include 300 to 301 and Arg-328; that span reads CL.

This sequence belongs to the aspartate/ornithine carbamoyltransferase superfamily. OTCase family.

It is found in the mitochondrion matrix. It catalyses the reaction carbamoyl phosphate + L-ornithine = L-citrulline + phosphate + H(+). Its pathway is amino-acid biosynthesis; L-arginine biosynthesis; L-arginine from L-ornithine and carbamoyl phosphate: step 1/3. The protein is Ornithine transcarbamylase, mitochondrial (OTC) of Pachysolen tannophilus (Yeast).